The sequence spans 186 residues: MEVGIISMRYAKALMAYAEERGAEERLYHELVTLAHSFRTVKGFCAVLDNPIVSVNEKFNLICTAADGDHKPSEEFIRFIRLVLKERRETYLQFMSLMYLDLYRKKKHIGVGKLITAVPVDKATEERIRQTAAHILHAYMELETVVDPSIEGGFVFDINDYRLDASIATQLKKVKQQFIDKNRRIV.

It belongs to the ATPase delta chain family. As to quaternary structure, F-type ATPases have 2 components, F(1) - the catalytic core - and F(0) - the membrane proton channel. F(1) has five subunits: alpha(3), beta(3), gamma(1), delta(1), epsilon(1). F(0) has three main subunits: a(1), b(2) and c(10-14). The alpha and beta chains form an alternating ring which encloses part of the gamma chain. F(1) is attached to F(0) by a central stalk formed by the gamma and epsilon chains, while a peripheral stalk is formed by the delta and b chains.

It localises to the cell inner membrane. Its function is as follows. F(1)F(0) ATP synthase produces ATP from ADP in the presence of a proton or sodium gradient. F-type ATPases consist of two structural domains, F(1) containing the extramembraneous catalytic core and F(0) containing the membrane proton channel, linked together by a central stalk and a peripheral stalk. During catalysis, ATP synthesis in the catalytic domain of F(1) is coupled via a rotary mechanism of the central stalk subunits to proton translocation. In terms of biological role, this protein is part of the stalk that links CF(0) to CF(1). It either transmits conformational changes from CF(0) to CF(1) or is implicated in proton conduction. This Bacteroides fragilis (strain ATCC 25285 / DSM 2151 / CCUG 4856 / JCM 11019 / LMG 10263 / NCTC 9343 / Onslow / VPI 2553 / EN-2) protein is ATP synthase subunit delta.